A 120-amino-acid polypeptide reads, in one-letter code: NAD(P)H-quinone oxidoreductase subunit 3, chloroplastic (120 aa).

Helical transmembrane passes span 9–29, 64–84, and 88–108; these read IFWA…LISG, MFAL…PWAM, and VLGV…IVGS.

Belongs to the complex I subunit 3 family. NDH is composed of at least 16 different subunits, 5 of which are encoded in the nucleus.

Its subcellular location is the plastid. It is found in the chloroplast thylakoid membrane. The catalysed reaction is a plastoquinone + NADH + (n+1) H(+)(in) = a plastoquinol + NAD(+) + n H(+)(out). The enzyme catalyses a plastoquinone + NADPH + (n+1) H(+)(in) = a plastoquinol + NADP(+) + n H(+)(out). Its function is as follows. NDH shuttles electrons from NAD(P)H:plastoquinone, via FMN and iron-sulfur (Fe-S) centers, to quinones in the photosynthetic chain and possibly in a chloroplast respiratory chain. The immediate electron acceptor for the enzyme in this species is believed to be plastoquinone. Couples the redox reaction to proton translocation, and thus conserves the redox energy in a proton gradient. In Gossypium barbadense (Sea Island cotton), this protein is NAD(P)H-quinone oxidoreductase subunit 3, chloroplastic.